A 293-amino-acid polypeptide reads, in one-letter code: 4-hydroxy-tetrahydrodipicolinate synthase (293 aa).

T45 serves as a coordination point for pyruvate. Catalysis depends on Y133, which acts as the Proton donor/acceptor. Residue K161 is the Schiff-base intermediate with substrate of the active site. I203 lines the pyruvate pocket.

The protein belongs to the DapA family. In terms of assembly, homotetramer; dimer of dimers.

It localises to the cytoplasm. The enzyme catalyses L-aspartate 4-semialdehyde + pyruvate = (2S,4S)-4-hydroxy-2,3,4,5-tetrahydrodipicolinate + H2O + H(+). It participates in amino-acid biosynthesis; L-lysine biosynthesis via DAP pathway; (S)-tetrahydrodipicolinate from L-aspartate: step 3/4. Catalyzes the condensation of (S)-aspartate-beta-semialdehyde [(S)-ASA] and pyruvate to 4-hydroxy-tetrahydrodipicolinate (HTPA). The chain is 4-hydroxy-tetrahydrodipicolinate synthase from Pseudoalteromonas atlantica (strain T6c / ATCC BAA-1087).